A 397-amino-acid polypeptide reads, in one-letter code: Class V chitinase CHIT5 (397 aa).

A signal peptide spans 1-18 (MIIKLLVALIHYLHETMA). Residues 54-397 (GVRAAYWPAW…SKQASNAWGY (344 aa)) enclose the GH18 domain. Residues Asn-128 and Asn-147 are each glycosylated (N-linked (GlcNAc...) asparagine). Glu-166 (proton donor) is an active-site residue. Residues Asn-193, Asn-209, Asn-247, and Asn-261 are each glycosylated (N-linked (GlcNAc...) asparagine).

It belongs to the glycosyl hydrolase 18 family. Chitinase class V subfamily.

It carries out the reaction Random endo-hydrolysis of N-acetyl-beta-D-glucosaminide (1-&gt;4)-beta-linkages in chitin and chitodextrins.. The protein operates within glycan degradation; chitin degradation. Possesses chitinase activity in vitro toward glycol chitin, carboxymethyl-chitin, colloidal chitin, and the chitin oligosaccharides (N-acetylglucosamine) (GlcNAc)6 and (GlcNAc)5. Hydrolyzes (GlcNAc)6 into (GlcNAc)4 and (GlcNAc)2, or two (GlcNAc)3 molecules. Has the capacity to inhibit hyphal growth of the fungus Trichoderma viride in an agar-plate bioassay. Involved in symbiotic signaling. Required for root hair infection threads (ITs) elongation and nodule development. Possesses Nod factor (NF) hydrolase activity. NFs are lipo-chitooligosaccharide signaling molecules produced by nitrogen-fixing rhizobia to initiate nodulation (symbiosis) on the roots of legumes. Modulates NF levels and signaling to complete transition of infected nodules to functional nitrogen-fixing organs. This chain is Class V chitinase CHIT5, found in Lotus japonicus (Lotus corniculatus var. japonicus).